A 561-amino-acid polypeptide reads, in one-letter code: Glutamine--tRNA ligase (561 aa).

A 'HIGH' region motif is present at residues 34–44 (PEPNGYLHIGH). ATP contacts are provided by residues 35–37 (EPN) and 41–47 (HIGHAKS). L-glutamine-binding residues include D67 and Y212. ATP is bound by residues T231, 261–262 (RL), and 269–271 (MSK). Positions 268-272 (VMSKR) match the 'KMSKS' region motif.

It belongs to the class-I aminoacyl-tRNA synthetase family. In terms of assembly, monomer.

Its subcellular location is the cytoplasm. The catalysed reaction is tRNA(Gln) + L-glutamine + ATP = L-glutaminyl-tRNA(Gln) + AMP + diphosphate. This Idiomarina loihiensis (strain ATCC BAA-735 / DSM 15497 / L2-TR) protein is Glutamine--tRNA ligase.